Here is a 325-residue protein sequence, read N- to C-terminus: Helicase VP6-A (325 aa).

2 disordered regions span residues 1-126 and 175-231; these read MLLA…TNGR and GVAE…PARI. Composition is skewed to basic and acidic residues over residues 8–18, 32–54, 61–79, and 92–105; these read VIKRSSEELKQ, EGGK…KDGE, GQKE…DRRI, and PGER…RGDG. ATP is bound at residue Lys-106. Positions 106–122 are enriched in gly residues; it reads KVGGGGGDADAGVGATG. The segment covering 175 to 229 has biased composition (basic and acidic residues); it reads GVAEQTERLRDLRRKEKNGTHAKAVERGGRKQRKESHGDAQREGVEEEKTSEEPA.

The protein belongs to the orbivirus VP6 family. In terms of assembly, homohexamer.

Its subcellular location is the virion. It catalyses the reaction ATP + H2O = ADP + phosphate + H(+). ATP dependent RNA helicase essential for RNA packaging and viral transcription. Possesses ss- and dsRNA-binding capacity. This Bluetongue virus 11 (isolate USA) (BTV 11) protein is Helicase VP6-A (Segment-9).